Here is a 272-residue protein sequence, read N- to C-terminus: Imidazole glycerol phosphate synthase subunit HisF (272 aa).

Catalysis depends on residues aspartate 11 and aspartate 130.

It belongs to the HisA/HisF family. As to quaternary structure, heterodimer of HisH and HisF.

It localises to the cytoplasm. The enzyme catalyses 5-[(5-phospho-1-deoxy-D-ribulos-1-ylimino)methylamino]-1-(5-phospho-beta-D-ribosyl)imidazole-4-carboxamide + L-glutamine = D-erythro-1-(imidazol-4-yl)glycerol 3-phosphate + 5-amino-1-(5-phospho-beta-D-ribosyl)imidazole-4-carboxamide + L-glutamate + H(+). Its pathway is amino-acid biosynthesis; L-histidine biosynthesis; L-histidine from 5-phospho-alpha-D-ribose 1-diphosphate: step 5/9. IGPS catalyzes the conversion of PRFAR and glutamine to IGP, AICAR and glutamate. The HisF subunit catalyzes the cyclization activity that produces IGP and AICAR from PRFAR using the ammonia provided by the HisH subunit. The sequence is that of Imidazole glycerol phosphate synthase subunit HisF from Methanococcus maripaludis (strain C7 / ATCC BAA-1331).